A 724-amino-acid chain; its full sequence is Protein-glutamine gamma-glutamyltransferase 5 (724 aa).

A2 bears the N-acetylalanine mark. Catalysis depends on residues C283, H342, and D365. Residues N405, D407, E453, and E458 each coordinate Ca(2+). Composition is skewed to polar residues over residues 473 to 486 and 495 to 505; these read RSQG…NPFS and ARSPDSPSLQP. Residues 473 to 505 are disordered; it reads RSQGPHQANSNPFSSVPPRHNSARSPDSPSLQP.

Belongs to the transglutaminase superfamily. Transglutaminase family. Ca(2+) is required as a cofactor.

The protein resides in the cytoplasm. The enzyme catalyses L-glutaminyl-[protein] + L-lysyl-[protein] = [protein]-L-lysyl-N(6)-5-L-glutamyl-[protein] + NH4(+). In terms of biological role, catalyzes the cross-linking of proteins and the conjugation of polyamines to proteins. Contributes to the formation of the cornified cell envelope of keratinocytes. The chain is Protein-glutamine gamma-glutamyltransferase 5 (Tgm5) from Mus musculus (Mouse).